The following is a 74-amino-acid chain: Small ribosomal subunit protein uS15 (74 aa).

The protein belongs to the universal ribosomal protein uS15 family. As to quaternary structure, part of the 30S ribosomal subunit. Forms a bridge to the 50S subunit in the 70S ribosome, contacting the 23S rRNA.

Its function is as follows. One of the primary rRNA binding proteins, it binds directly to 16S rRNA where it helps nucleate assembly of the platform of the 30S subunit by binding and bridging several RNA helices of the 16S rRNA. Forms an intersubunit bridge (bridge B4) with the 23S rRNA of the 50S subunit in the ribosome. The protein is Small ribosomal subunit protein uS15 of Aster yellows witches'-broom phytoplasma (strain AYWB).